A 279-amino-acid polypeptide reads, in one-letter code: MKIIILLGFLGATLSAPLIPQRLMSASNSNELLLNLNNGQLLPLQLQGPLNSWIPPFSGILQQQQQAQIPGLSQFSLSALDQFAGLLPNQIPLTGEASFAQGAQAGQVDPLQLQTPPQTQPGPSHVMPYVFSFKMPQEQGQMFQYYPVYMVLPWEQPQQTVPRSPQQTRQQQYEEQIPFYAQFGYIPQLAEPAISGGQQQLAFDPQLGTAPEIAVMSTGEEIPYLQKEAINFRHDSAGVFMPSTSPKPSTTNVFTSAVDQTITPELPEEKDKTDSLREP.

The N-terminal stretch at 1–15 is a signal peptide; the sequence is MKIIILLGFLGATLS. T115 and T119 each carry an O-linked (GalNAc...) threonine glycan. An interaction with ARHGEF5 region spans residues 127–129; it reads MPY. A compositionally biased stretch (polar residues) spans 243 to 263; sequence STSPKPSTTNVFTSAVDQTIT. A disordered region spans residues 243 to 279; the sequence is STSPKPSTTNVFTSAVDQTITPELPEEKDKTDSLREP. An O-linked (GalNAc...) threonine glycan is attached at T244. O-linked (GalNAc...) serine glycosylation occurs at S249. O-linked (GalNAc...) threonine glycosylation is found at T250, T251, and T255. An O-linked (GalNAc...) serine glycan is attached at S256. O-linked (GalNAc...) threonine glycosylation is found at T261, T263, and T273. Over residues 267-279 the composition is skewed to basic and acidic residues; that stretch reads PEEKDKTDSLREP. Residue S275 is glycosylated (O-linked (GalNAc...) serine).

It belongs to the ODAM family. As to quaternary structure, interacts (via C-terminus) with ARHGEF5. In terms of processing, O-glycosylated. Expressed in the junctional epithelium of healthy teeth. In periodontitis, absent in the pocket epithelium of the diseased periodontium but is detected in the gingival crevicular fluid.

The protein localises to the secreted. It is found in the cytoplasm. It localises to the nucleus. Its function is as follows. Tooth-associated epithelia protein that probably plays a role in odontogenesis, the complex process that results in the initiation and generation of the tooth. May be incorporated in the enamel matrix at the end of mineralization process. Involved in the induction of RHOA activity via interaction with ARHGEF and expression of downstream factors such as ROCK. Plays a role in attachment of the junctional epithelium to the tooth surface. This Homo sapiens (Human) protein is Odontogenic ameloblast-associated protein (ODAM).